Here is a 383-residue protein sequence, read N- to C-terminus: Chaperone protein DnaJ (383 aa).

Positions 6–70 (DYYDVLGVGR…QKRAAYDQYG (65 aa)) constitute a J domain. The CR-type zinc finger occupies 140–222 (GKETKISYSR…CHGTGREEER (83 aa)). Positions 153, 156, 170, 173, 196, 199, 210, and 213 each coordinate Zn(2+). CXXCXGXG motif repeat units lie at residues 153–160 (CHTCHGSG), 170–177 (CHKCHGAG), 196–203 (CDVCGGTG), and 210–217 (CDTCHGTG).

It belongs to the DnaJ family. Homodimer. The cofactor is Zn(2+).

Its subcellular location is the cytoplasm. In terms of biological role, participates actively in the response to hyperosmotic and heat shock by preventing the aggregation of stress-denatured proteins and by disaggregating proteins, also in an autonomous, DnaK-independent fashion. Unfolded proteins bind initially to DnaJ; upon interaction with the DnaJ-bound protein, DnaK hydrolyzes its bound ATP, resulting in the formation of a stable complex. GrpE releases ADP from DnaK; ATP binding to DnaK triggers the release of the substrate protein, thus completing the reaction cycle. Several rounds of ATP-dependent interactions between DnaJ, DnaK and GrpE are required for fully efficient folding. Also involved, together with DnaK and GrpE, in the DNA replication of plasmids through activation of initiation proteins. In Latilactobacillus sakei subsp. sakei (strain 23K) (Lactobacillus sakei subsp. sakei), this protein is Chaperone protein DnaJ.